A 342-amino-acid chain; its full sequence is Inactive chitinase-like protein 2 (342 aa).

Positions methionine 1–alanine 19 are cleaved as a signal peptide. Residues glutamate 20–glycine 60 form the Chitin-binding type-1 domain. 7 cysteine pairs are disulfide-bonded: cysteine 22–cysteine 37, cysteine 31–cysteine 43, cysteine 36–cysteine 80, cysteine 84–cysteine 88, cysteine 122–cysteine 184, cysteine 196–cysteine 204, and cysteine 301–cysteine 333.

Belongs to the glycosyl hydrolase 19 family. Chitinase class I subfamily.

Its function is as follows. Inactive chitinase-like protein that does not exhibit hydrolytic activity toward chitin. Binds strongly to chitin and possesses antifungal activity toward the fungal pathogen Altenaria alternata in plate assays. Probably involved in defense against fungal pathogens through a mechanism that only involves carbohydrate binding. In Hevea brasiliensis (Para rubber tree), this protein is Inactive chitinase-like protein 2.